The sequence spans 302 residues: Proline dehydrogenase 1 (302 aa).

A substrate-binding site is contributed by Lys95. Asp129 is an active-site residue. Positions 130 and 158 each coordinate FAD. The active site involves Arg179. FAD contacts are provided by residues Lys182–Ala184 and Thr221–His222. Arg283–Arg284 is a binding site for substrate.

Belongs to the proline oxidase family. Requires FAD as cofactor.

The catalysed reaction is L-proline + a quinone = (S)-1-pyrroline-5-carboxylate + a quinol + H(+). The protein operates within amino-acid degradation; L-proline degradation into L-glutamate; L-glutamate from L-proline: step 1/2. Functionally, converts proline to delta-1-pyrroline-5-carboxylate. The chain is Proline dehydrogenase 1 (fadM) from Bacillus subtilis subsp. natto.